Consider the following 631-residue polypeptide: 1-deoxy-D-xylulose-5-phosphate synthase (631 aa).

Thiamine diphosphate is bound by residues His-74 and 115-117; that span reads GHS. Asp-146 is a binding site for Mg(2+). Residues 147–148, Asn-175, Tyr-286, and Glu-368 each bind thiamine diphosphate; that span reads GA. Residue Asn-175 coordinates Mg(2+).

The protein belongs to the transketolase family. DXPS subfamily. Homodimer. Requires Mg(2+) as cofactor. Thiamine diphosphate serves as cofactor.

It carries out the reaction D-glyceraldehyde 3-phosphate + pyruvate + H(+) = 1-deoxy-D-xylulose 5-phosphate + CO2. It functions in the pathway metabolic intermediate biosynthesis; 1-deoxy-D-xylulose 5-phosphate biosynthesis; 1-deoxy-D-xylulose 5-phosphate from D-glyceraldehyde 3-phosphate and pyruvate: step 1/1. Its function is as follows. Catalyzes the acyloin condensation reaction between C atoms 2 and 3 of pyruvate and glyceraldehyde 3-phosphate to yield 1-deoxy-D-xylulose-5-phosphate (DXP). The chain is 1-deoxy-D-xylulose-5-phosphate synthase from Natranaerobius thermophilus (strain ATCC BAA-1301 / DSM 18059 / JW/NM-WN-LF).